The sequence spans 99 residues: UPF0125 protein BU253 (99 aa).

This sequence belongs to the UPF0125 (RnfH) family.

The protein is UPF0125 protein BU253 of Buchnera aphidicola subsp. Acyrthosiphon pisum (strain APS) (Acyrthosiphon pisum symbiotic bacterium).